The sequence spans 469 residues: Glutamate--tRNA ligase 1 (469 aa).

A 'HIGH' region motif is present at residues 8 to 18 (PSPTGYLHIGG). The tract at residues 117–137 (TPRYDGTWRPEPGKELPPVPA) is disordered. The short motif at 240 to 244 (KLSKR) is the 'KMSKS' region element. Lysine 243 provides a ligand contact to ATP.

This sequence belongs to the class-I aminoacyl-tRNA synthetase family. Glutamate--tRNA ligase type 1 subfamily. As to quaternary structure, monomer.

It localises to the cytoplasm. It catalyses the reaction tRNA(Glu) + L-glutamate + ATP = L-glutamyl-tRNA(Glu) + AMP + diphosphate. Functionally, catalyzes the attachment of glutamate to tRNA(Glu) in a two-step reaction: glutamate is first activated by ATP to form Glu-AMP and then transferred to the acceptor end of tRNA(Glu). In Aliarcobacter butzleri (strain RM4018) (Arcobacter butzleri), this protein is Glutamate--tRNA ligase 1.